The sequence spans 126 residues: Protein ApaG (126 aa).

Residues 2–126 enclose the ApaG domain; that stretch reads SDTQHQVNVR…FRLAVPGALH (125 aa).

This Pseudomonas paraeruginosa (strain DSM 24068 / PA7) (Pseudomonas aeruginosa (strain PA7)) protein is Protein ApaG.